A 328-amino-acid polypeptide reads, in one-letter code: Malate dehydrogenase (328 aa).

Residue 12–18 (GAAGQIA) participates in NAD(+) binding. Substrate-binding residues include R93 and R99. NAD(+) contacts are provided by residues N106, Q113, and 130–132 (VGN). Substrate-binding residues include N132 and R163. Catalysis depends on H188, which acts as the Proton acceptor.

This sequence belongs to the LDH/MDH superfamily. MDH type 2 family.

The catalysed reaction is (S)-malate + NAD(+) = oxaloacetate + NADH + H(+). In terms of biological role, catalyzes the reversible oxidation of malate to oxaloacetate. In Burkholderia cenocepacia (strain ATCC BAA-245 / DSM 16553 / LMG 16656 / NCTC 13227 / J2315 / CF5610) (Burkholderia cepacia (strain J2315)), this protein is Malate dehydrogenase.